A 590-amino-acid polypeptide reads, in one-letter code: Aspartate--tRNA(Asp/Asn) ligase (590 aa).

Glu175 serves as a coordination point for L-aspartate. The interval 199 to 202 is aspartate; sequence QQYK. Residues Arg221 and His450 each contribute to the L-aspartate site. 221 to 223 contacts ATP; it reads RDE. Residue Glu484 participates in ATP binding. Arg491 contacts L-aspartate. Position 536–539 (536–539) interacts with ATP; that stretch reads GVDR.

It belongs to the class-II aminoacyl-tRNA synthetase family. Type 1 subfamily. As to quaternary structure, homodimer.

It localises to the cytoplasm. It carries out the reaction tRNA(Asx) + L-aspartate + ATP = L-aspartyl-tRNA(Asx) + AMP + diphosphate. Its function is as follows. Aspartyl-tRNA synthetase with relaxed tRNA specificity since it is able to aspartylate not only its cognate tRNA(Asp) but also tRNA(Asn). Reaction proceeds in two steps: L-aspartate is first activated by ATP to form Asp-AMP and then transferred to the acceptor end of tRNA(Asp/Asn). This chain is Aspartate--tRNA(Asp/Asn) ligase, found in Bradyrhizobium sp. (strain BTAi1 / ATCC BAA-1182).